The chain runs to 416 residues: Formyl-CoA:oxalate CoA-transferase (416 aa).

CoA contacts are provided by residues 17–18 (QS), Arg-38, 72–75 (LNTK), 96–98 (NFH), His-104, and 137–140 (KAYE). Asp-169 (nucleophile) is an active-site residue. Residue 248 to 250 (GGQ) coordinates substrate. Residue 273-275 (QEQ) coordinates CoA.

Belongs to the CoA-transferase III family. Frc subfamily. In terms of assembly, homodimer.

The enzyme catalyses formyl-CoA + oxalate = oxalyl-CoA + formate. It participates in metabolic intermediate degradation; oxalate degradation; CO(2) and formate from oxalate: step 1/2. Involved in the catabolism of oxalate and in the adapatation to low pH via the induction of the oxalate-dependent acid tolerance response (ATR). Catalyzes the transfer of the CoA moiety from formyl-CoA to oxalate. The sequence is that of Formyl-CoA:oxalate CoA-transferase from Escherichia coli O6:H1 (strain CFT073 / ATCC 700928 / UPEC).